Consider the following 265-residue polypeptide: 4-hydroxy-tetrahydrodipicolinate reductase (265 aa).

NAD(+)-binding positions include 7–12 and Asp33; that span reads GASGRM. Arg34 is a binding site for NADP(+). Residues 96–98 and 120–123 each bind NAD(+); these read GTT and AANM. His153 (proton donor/acceptor) is an active-site residue. His154 is a binding site for (S)-2,3,4,5-tetrahydrodipicolinate. Residue Lys157 is the Proton donor of the active site. Position 163-164 (163-164) interacts with (S)-2,3,4,5-tetrahydrodipicolinate; sequence GT.

The protein belongs to the DapB family.

It is found in the cytoplasm. The catalysed reaction is (S)-2,3,4,5-tetrahydrodipicolinate + NAD(+) + H2O = (2S,4S)-4-hydroxy-2,3,4,5-tetrahydrodipicolinate + NADH + H(+). It catalyses the reaction (S)-2,3,4,5-tetrahydrodipicolinate + NADP(+) + H2O = (2S,4S)-4-hydroxy-2,3,4,5-tetrahydrodipicolinate + NADPH + H(+). It functions in the pathway amino-acid biosynthesis; L-lysine biosynthesis via DAP pathway; (S)-tetrahydrodipicolinate from L-aspartate: step 4/4. Its function is as follows. Catalyzes the conversion of 4-hydroxy-tetrahydrodipicolinate (HTPA) to tetrahydrodipicolinate. In Burkholderia multivorans (strain ATCC 17616 / 249), this protein is 4-hydroxy-tetrahydrodipicolinate reductase.